The primary structure comprises 415 residues: MIKVSDLVIPTINDLELQNKKVLLRIDVNSPVDKNTGKLLDDSRIKAHSITIKELLKKGNSIVLISHQGRPGDDDFISLKEHSLLLSKYVGTEIEFVEDIIGPYAVEKIKKLDNKGVIMLENIRLMSEELIEAPPQQHAKSFLIKKLSPLFDAYVNDSFSAAHRSQPSLVGFPLVLPSAAGIVMEKEVSALSKIFNYEDSPKIFVLGGGKVNDTLKIIENLIKNRVADRILTGGLVAELFAVAKGINLGKKNMQVLENKGLLSLVPRARKMLLSGAPIEIPVDFVTEQENSQTLEEPTSNLKGTIKDIGNTTIEMYSSFIKESKVVVLRGPMGVIEDERFRRGSKALLTSAVEGPGYVIIGGGHMISMIDKNIQINENKVHVSTGGGALLLFLAGEKLPVLESLHLSWVVRSGKS.

Residues 27–29 (DVN), R44, 67–70 (HQGR), R124, and R164 contribute to the substrate site. Residues E336 and 362 to 365 (GGHM) contribute to the ATP site.

It belongs to the phosphoglycerate kinase family. As to quaternary structure, monomer.

The protein resides in the cytoplasm. The enzyme catalyses (2R)-3-phosphoglycerate + ATP = (2R)-3-phospho-glyceroyl phosphate + ADP. Its pathway is carbohydrate degradation; glycolysis; pyruvate from D-glyceraldehyde 3-phosphate: step 2/5. This chain is Phosphoglycerate kinase, found in Sulfolobus acidocaldarius (strain ATCC 33909 / DSM 639 / JCM 8929 / NBRC 15157 / NCIMB 11770).